The chain runs to 569 residues: Hemin/hemoglobin-binding protein 2 (569 aa).

An N-terminal signal peptide occupies residues 1–28 (MKKLWKKGLVAFLALTLIFQLIPGFASA). NEAT domains are found at residues 34-173 (KDGG…FKVI), 184-307 (LSDG…ATAA), and 360-484 (LNNH…IKDI). Heme is bound by residues 204–205 (SS), Y280, and Y289. Residues 307–357 (ASSYPGSDETPPVVNPGETNPPVTKPDPGTTNPPVTTPPTTPSKPAVVDPK) form a disordered region. The span at 502–511 (TGNVASNNNA) shows a compositional bias: polar residues. Residues 502 to 537 (TGNVASNNNAGPKLAKPDFDDTNSVQKTASKTEKNA) are disordered. An NXZTN sorting signal motif is present at residues 536–540 (NAKTN). At T539 the chain carries Pentaglycyl murein peptidoglycan amidated threonine. The propeptide at 540-569 (NDSSSMVWYITLFGASFLYLAYRLKRKRLS) is removed by sortase B.

It localises to the cell surface. The protein resides in the secreted. Its subcellular location is the cell wall. Its activity is regulated as follows. Is overexpressed in mecA, clpC and clpP mutants, suggesting the protein level is controlled by MecA, ClpC and ClpP (at protein level). Its function is as follows. Acts as an extracellular and cell wall-bound hemophore; scavenges host heme and hemoglobin from the environment and also serves as a cell wall receptor for both. At low hemin (Hn) and hemoglobin (Hb) concentrations adsorbs Hn/Hb and presumably directs it to membrane transporters. Soluble Hbp2 can probably pass Hn/Hb to cell wall-anchored Hbp2, and both forms can accept Hn/Hb from Hbp1. May be involved in crossing the digestive barrier in infected animals. Binds host hemin. Binds host hemoglobin with affinity in the nanomolar range. In Listeria monocytogenes serovar 1/2a (strain ATCC BAA-679 / EGD-e), this protein is Hemin/hemoglobin-binding protein 2.